Reading from the N-terminus, the 825-residue chain is Glycerol-3-phosphate acyltransferase (825 aa).

Residues 304 to 309 (CHRSHM) carry the HXXXXD motif motif. A disordered region spans residues 803–825 (MPAETSNQPEAPETPEPEGKTES).

The protein belongs to the GPAT/DAPAT family.

Its subcellular location is the cell inner membrane. It carries out the reaction sn-glycerol 3-phosphate + an acyl-CoA = a 1-acyl-sn-glycero-3-phosphate + CoA. Its pathway is phospholipid metabolism; CDP-diacylglycerol biosynthesis; CDP-diacylglycerol from sn-glycerol 3-phosphate: step 1/3. The protein is Glycerol-3-phosphate acyltransferase of Yersinia pseudotuberculosis serotype O:1b (strain IP 31758).